A 653-amino-acid polypeptide reads, in one-letter code: Chaperone protein DnaK (653 aa).

Phosphothreonine; by autocatalysis is present on Thr-200. Residues Gln-612 to Asp-653 form a disordered region. Over residues Ala-627 to Ala-639 the composition is skewed to low complexity.

The protein belongs to the heat shock protein 70 family.

Functionally, acts as a chaperone. This Paraburkholderia phymatum (strain DSM 17167 / CIP 108236 / LMG 21445 / STM815) (Burkholderia phymatum) protein is Chaperone protein DnaK.